Reading from the N-terminus, the 449-residue chain is Alpha-L-fucosidase (449 aa).

The first 19 residues, 1–19 (MGLLLLLSLLSACFQPRYA), serve as a signal peptide directing secretion. Residues N156, N224, N362, and N375 are each glycosylated (N-linked (GlcNAc...) asparagine).

The protein belongs to the glycosyl hydrolase 29 family. In terms of assembly, homotetramer.

The protein localises to the secreted. The enzyme catalyses an alpha-L-fucoside + H2O = L-fucose + an alcohol. Alpha-L-fucosidase is responsible for hydrolyzing the alpha-1,6-linked fucose joined to the reducing-end N-acetylglucosamine of the carbohydrate moieties of glycoproteins. The polypeptide is Alpha-L-fucosidase (Branchiostoma floridae (Florida lancelet)).